Here is a 327-residue protein sequence, read N- to C-terminus: MESKETVRIGGRRSKLAVVQSEQVKVMIESKFSHIECPLLSVHTLGDQVQSKPLYSFGGKAVWTKELEDLLYKDDESRIDLIVHSLKDMPTLLPDGFELGGITKRVDPTDALVMPIGSPYSSLSELPDGSVVGTSSVRRSAQLKRKFPNLKFESIRGNIQTRLAKLDDPETPYKCIVLASAGLMRSGLDSRITQRFNADTMCYAVGQGALGIEIRKDDEKMKKILKEICDPSTTICCLAERSLLRTLEGGCSVPIGVVSNYDESTKVLTLKGIVINVEGTEWVEIEHKVTISNEREDSINCGKELAAKLTQNGAKEILDSINLDKIT.

An S-(dipyrrolylmethanemethyl)cysteine modification is found at Cys251.

The protein belongs to the HMBS family. The cofactor is dipyrromethane.

The enzyme catalyses 4 porphobilinogen + H2O = hydroxymethylbilane + 4 NH4(+). The protein operates within porphyrin-containing compound metabolism; protoporphyrin-IX biosynthesis; coproporphyrinogen-III from 5-aminolevulinate: step 2/4. Functionally, tetrapolymerization of the monopyrrole PBG into the hydroxymethylbilane pre-uroporphyrinogen in several discrete steps. This Kluyveromyces lactis (strain ATCC 8585 / CBS 2359 / DSM 70799 / NBRC 1267 / NRRL Y-1140 / WM37) (Yeast) protein is Porphobilinogen deaminase (HEM3).